The sequence spans 260 residues: Proteasome subunit alpha (260 aa).

Positions 241–260 are disordered; the sequence is VEEEEVKEKEEDYSELDSHY.

It belongs to the peptidase T1A family. In terms of assembly, the 20S proteasome core is composed of 14 alpha and 14 beta subunits that assemble into four stacked heptameric rings, resulting in a barrel-shaped structure. The two inner rings, each composed of seven catalytic beta subunits, are sandwiched by two outer rings, each composed of seven alpha subunits. The catalytic chamber with the active sites is on the inside of the barrel. Has a gated structure, the ends of the cylinder being occluded by the N-termini of the alpha-subunits. Is capped at one or both ends by the proteasome regulatory ATPase, PAN.

The protein localises to the cytoplasm. Its activity is regulated as follows. The formation of the proteasomal ATPase PAN-20S proteasome complex, via the docking of the C-termini of PAN into the intersubunit pockets in the alpha-rings, triggers opening of the gate for substrate entry. Interconversion between the open-gate and close-gate conformations leads to a dynamic regulation of the 20S proteasome proteolysis activity. Component of the proteasome core, a large protease complex with broad specificity involved in protein degradation. The chain is Proteasome subunit alpha from Pyrococcus horikoshii (strain ATCC 700860 / DSM 12428 / JCM 9974 / NBRC 100139 / OT-3).